The primary structure comprises 120 residues: Ribosome-binding factor A (120 aa).

This sequence belongs to the RbfA family. Monomer. Binds 30S ribosomal subunits, but not 50S ribosomal subunits or 70S ribosomes.

It is found in the cytoplasm. Functionally, one of several proteins that assist in the late maturation steps of the functional core of the 30S ribosomal subunit. Associates with free 30S ribosomal subunits (but not with 30S subunits that are part of 70S ribosomes or polysomes). Required for efficient processing of 16S rRNA. May interact with the 5'-terminal helix region of 16S rRNA. The sequence is that of Ribosome-binding factor A from Clostridium botulinum (strain Loch Maree / Type A3).